The primary structure comprises 473 residues: Tryptophanase (473 aa).

N6-(pyridoxal phosphate)lysine is present on lysine 270.

The protein belongs to the beta-eliminating lyase family. In terms of assembly, homotetramer. Pyridoxal 5'-phosphate is required as a cofactor.

It carries out the reaction L-tryptophan + H2O = indole + pyruvate + NH4(+). The protein operates within amino-acid degradation; L-tryptophan degradation via pyruvate pathway; indole and pyruvate from L-tryptophan: step 1/1. The chain is Tryptophanase from Vibrio vulnificus (strain CMCP6).